The chain runs to 323 residues: Probable cell division protein WhiA (323 aa).

The segment at residues 279-313 is a DNA-binding region (H-T-H motif); the sequence is TLKELGEMVSGGKISKSGINHRLRKLDEIAERLRA.

This sequence belongs to the WhiA family.

In terms of biological role, involved in cell division and chromosome segregation. The sequence is that of Probable cell division protein WhiA from Anoxybacillus flavithermus (strain DSM 21510 / WK1).